A 270-amino-acid polypeptide reads, in one-letter code: Thiazole synthase (270 aa).

The Schiff-base intermediate with DXP role is filled by Lys-112. 1-deoxy-D-xylulose 5-phosphate is bound by residues Gly-173, 199 to 200 (AG), and 221 to 222 (NS).

It belongs to the ThiG family. As to quaternary structure, homotetramer. Forms heterodimers with either ThiH or ThiS.

The protein resides in the cytoplasm. The catalysed reaction is [ThiS sulfur-carrier protein]-C-terminal-Gly-aminoethanethioate + 2-iminoacetate + 1-deoxy-D-xylulose 5-phosphate = [ThiS sulfur-carrier protein]-C-terminal Gly-Gly + 2-[(2R,5Z)-2-carboxy-4-methylthiazol-5(2H)-ylidene]ethyl phosphate + 2 H2O + H(+). The protein operates within cofactor biosynthesis; thiamine diphosphate biosynthesis. Functionally, catalyzes the rearrangement of 1-deoxy-D-xylulose 5-phosphate (DXP) to produce the thiazole phosphate moiety of thiamine. Sulfur is provided by the thiocarboxylate moiety of the carrier protein ThiS. In vitro, sulfur can be provided by H(2)S. This Pseudomonas putida (strain ATCC 700007 / DSM 6899 / JCM 31910 / BCRC 17059 / LMG 24140 / F1) protein is Thiazole synthase.